The chain runs to 711 residues: Ribosomal RNA large subunit methyltransferase K/L (711 aa).

The region spanning 43–154 is the THUMP domain; sequence LGYRITLWSR…RGEITIGINF (112 aa).

This sequence belongs to the methyltransferase superfamily. RlmKL family.

It localises to the cytoplasm. It catalyses the reaction guanosine(2445) in 23S rRNA + S-adenosyl-L-methionine = N(2)-methylguanosine(2445) in 23S rRNA + S-adenosyl-L-homocysteine + H(+). It carries out the reaction guanosine(2069) in 23S rRNA + S-adenosyl-L-methionine = N(2)-methylguanosine(2069) in 23S rRNA + S-adenosyl-L-homocysteine + H(+). Specifically methylates the guanine in position 2445 (m2G2445) and the guanine in position 2069 (m7G2069) of 23S rRNA. This chain is Ribosomal RNA large subunit methyltransferase K/L, found in Shewanella pealeana (strain ATCC 700345 / ANG-SQ1).